Reading from the N-terminus, the 300-residue chain is Tegument protein VP22 (300 aa).

Residues 1–148 are disordered; that stretch reads MTSRRSVKSC…PARGRRPAQA (148 aa). 2 stretches are compositionally biased toward basic and acidic residues: residues 10–22 and 50–61; these read CPRE…HEEL and PRGEVRFLHYDE. A Nuclear localization signal motif is present at residues 163-166; the sequence is GRTK. Positions 174-267 are interaction with gE; the sequence is KKLHFSTAPP…LVNPDAAQDV (94 aa). Positions 232 to 244 match the Nuclear export signal motif; sequence LNELLDLTTIRVT. The segment covering 269–292 has biased composition (low complexity); it reads ATAAARGRPAGRAAATARAPARSA. A disordered region spans residues 269-300; the sequence is ATAAARGRPAGRAAATARAPARSASRPRRPLE.

Belongs to the alphaherpesvirinae VP22 tegument protein family. As to quaternary structure, interacts with gE (via C-terminus); this interaction is necessary for the recruitment of VP22 to the Golgi and its packaging into virions. Interacts with gM (via C-terminus). Interacts with VP16; this interaction allows the formation of a tripartite complex composed of VP16, VP22 and UL41/VHS. Interacts with the capsid-binding protein UL16. Interacts with host CGAS. In terms of processing, highly phosphorylated in the host cell. Packaging is selective for underphosphorylated forms.

Its subcellular location is the virion tegument. The protein resides in the host cytoplasm. The protein localises to the host nucleus. It is found in the host Golgi apparatus. Tegument protein that plays different roles during the time course of infection. Participates in both the accumulation of viral mRNAs and viral protein translation at late time of infection. Modulates the RNase activity of the virion host shutoff protein UL41 probably to ensure necessary levels of key cellular mRNAs and proteins. Plays a role in microtubule reorganization that occurs after viral infection by stabilizing microtubule network. Plays a role in the inhibition of host innate immune system by targeting the CGAS enzymatic activity which is the principal cytosolic DNA sensor that detects invading viral DNA. Acts by mediating disruption of liquid-like droplets in which CGAS is activated, thereby preventing CGAS activity. This chain is Tegument protein VP22, found in Homo sapiens (Human).